A 258-amino-acid chain; its full sequence is Ribonuclease HII (258 aa).

One can recognise an RNase H type-2 domain in the interval 71–258; that stretch reads QLIAGIDEVG…PIKTMVNFKS (188 aa). A divalent metal cation-binding residues include Asp-77, Glu-78, and Asp-169.

Belongs to the RNase HII family. Mn(2+) is required as a cofactor. Mg(2+) serves as cofactor.

The protein resides in the cytoplasm. It carries out the reaction Endonucleolytic cleavage to 5'-phosphomonoester.. Endonuclease that specifically degrades the RNA of RNA-DNA hybrids. The chain is Ribonuclease HII (rnhB) from Lactococcus lactis subsp. lactis (strain IL1403) (Streptococcus lactis).